A 514-amino-acid chain; its full sequence is Peptide chain release factor 3 (514 aa).

Residues 8 to 268 (KKRRTFAIIS…TFLKFAPEPH (261 aa)) enclose the tr-type G domain. GTP-binding positions include 17-24 (SHPDAGKT), 85-89 (DTPGH), and 139-142 (NKLD).

The protein belongs to the TRAFAC class translation factor GTPase superfamily. Classic translation factor GTPase family. PrfC subfamily.

Its subcellular location is the cytoplasm. Increases the formation of ribosomal termination complexes and stimulates activities of RF-1 and RF-2. It binds guanine nucleotides and has strong preference for UGA stop codons. It may interact directly with the ribosome. The stimulation of RF-1 and RF-2 is significantly reduced by GTP and GDP, but not by GMP. This chain is Peptide chain release factor 3, found in Streptococcus sanguinis (strain SK36).